A 104-amino-acid polypeptide reads, in one-letter code: Large ribosomal subunit protein uL24 (104 aa).

This sequence belongs to the universal ribosomal protein uL24 family. Part of the 50S ribosomal subunit.

One of two assembly initiator proteins, it binds directly to the 5'-end of the 23S rRNA, where it nucleates assembly of the 50S subunit. In terms of biological role, one of the proteins that surrounds the polypeptide exit tunnel on the outside of the subunit. The sequence is that of Large ribosomal subunit protein uL24 from Psychromonas ingrahamii (strain DSM 17664 / CCUG 51855 / 37).